We begin with the raw amino-acid sequence, 816 residues long: MANYGTKIDEKWQKFWDENEVYKFNPENSGKKLYTLEMFSYPSGAQLHAGHWFNYGPTDSWARLKRMQGYNVFQPMGFDAFGLPAENYAIKTGIHPQDSTLKNIETMEKQLKSMGAMFNWENEVVTCLPDYYKWTQWLFLKLYEKGLAYRKKAPVNWCPSCNTVLANEQVVDGVCERCSTEVTKKDLTQWFFKITEYGDELLDKLDGLDWPEKTKSMQKHWIGRSYGAEVTFKVKDSDLKFDVFTTRVDTLNGVTYVVLAPENKLVDELTIPEYKAAVEEYKEAAAKQSEIERQSVSKEKTGVFTGSYAINPINGKVVPIWISDYVLATYGTGCVMAVPAHDERDFAFATKFNLPIERVITDKENTNPDLPYCEYGVLVNSGKFDGLTTDEAKKKIVEELEKDELGAMKKNFRLRDWLVSRQRYWGAPIPVIYCDDCGIVPVPEKDLPVKLPYNVEFTPDGKSPLGKCEDFVNTTCPHCGKPAKREADTLDTFVCSSFYYLRYVDNKNDDAPFDSEKVNKMLPVDKYVGGPEHACMHLLYARFITKALRDMGYLNFDEPFLSLTHQGLILGPDGLKMSKSKGNTISPDDYIKEYGADVFRMYLMFGFGYTEGGAWSDDGIKSVGKFVDRIERILENCRNIINSNESTKDSIDSAEKELNFWKHNTIKGVTEDGDKMQFNTAIARLMELTNALNKYTQENIKNANFLKETIVDFIKLLAPFAPHFAEEQWSLLGNNSTIFNEKWPEFNPAALVKDEVEIAIQINGKIKAKIMVASNLDEEGIKAASLENETIKENTEGKTIVKVIVIKGRLVNIVVK.

Positions 40–51 (SYPSGAQLHAGH) match the 'HIGH' region motif. Positions 576-580 (KMSKS) match the 'KMSKS' region motif. Lys-579 lines the ATP pocket.

This sequence belongs to the class-I aminoacyl-tRNA synthetase family.

The protein resides in the cytoplasm. The enzyme catalyses tRNA(Leu) + L-leucine + ATP = L-leucyl-tRNA(Leu) + AMP + diphosphate. In Clostridium beijerinckii (strain ATCC 51743 / NCIMB 8052) (Clostridium acetobutylicum), this protein is Leucine--tRNA ligase.